Here is a 198-residue protein sequence, read N- to C-terminus: Ribonuclease HII (198 aa).

The 189-residue stretch at 10 to 198 (HLVAGVDEVG…PVKRALGLVS (189 aa)) folds into the RNase H type-2 domain. The a divalent metal cation site is built by Asp-16, Glu-17, and Asp-108.

This sequence belongs to the RNase HII family. It depends on Mn(2+) as a cofactor. The cofactor is Mg(2+).

It localises to the cytoplasm. It carries out the reaction Endonucleolytic cleavage to 5'-phosphomonoester.. Endonuclease that specifically degrades the RNA of RNA-DNA hybrids. This is Ribonuclease HII from Salmonella schwarzengrund (strain CVM19633).